The following is a 199-amino-acid chain: dITP/XTP pyrophosphatase (199 aa).

8 to 13 lines the substrate pocket; that stretch reads THNRNK. Aspartate 68 functions as the Proton acceptor in the catalytic mechanism. Aspartate 68 provides a ligand contact to Mg(2+). Residues serine 69, 151–154, lysine 174, and 179–180 contribute to the substrate site; these read HGYD and HR.

This sequence belongs to the HAM1 NTPase family. As to quaternary structure, homodimer. Requires Mg(2+) as cofactor.

The enzyme catalyses XTP + H2O = XMP + diphosphate + H(+). The catalysed reaction is dITP + H2O = dIMP + diphosphate + H(+). It catalyses the reaction ITP + H2O = IMP + diphosphate + H(+). Its function is as follows. Pyrophosphatase that catalyzes the hydrolysis of nucleoside triphosphates to their monophosphate derivatives, with a high preference for the non-canonical purine nucleotides XTP (xanthosine triphosphate), dITP (deoxyinosine triphosphate) and ITP. Seems to function as a house-cleaning enzyme that removes non-canonical purine nucleotides from the nucleotide pool, thus preventing their incorporation into DNA/RNA and avoiding chromosomal lesions. This is dITP/XTP pyrophosphatase from Leifsonia xyli subsp. xyli (strain CTCB07).